A 474-amino-acid chain; its full sequence is UDP-N-acetylmuramate--L-alanine ligase (474 aa).

119–125 (GTHGKTT) lines the ATP pocket.

The protein belongs to the MurCDEF family.

It localises to the cytoplasm. It catalyses the reaction UDP-N-acetyl-alpha-D-muramate + L-alanine + ATP = UDP-N-acetyl-alpha-D-muramoyl-L-alanine + ADP + phosphate + H(+). Its pathway is cell wall biogenesis; peptidoglycan biosynthesis. In terms of biological role, cell wall formation. This chain is UDP-N-acetylmuramate--L-alanine ligase, found in Jannaschia sp. (strain CCS1).